Reading from the N-terminus, the 192-residue chain is Probable apo-citrate lyase phosphoribosyl-dephospho-CoA transferase (192 aa).

This sequence belongs to the CitX family.

The catalysed reaction is apo-[citrate lyase ACP] + 2'-(5''-triphospho-alpha-D-ribosyl)-3'-dephospho-CoA = holo-[citrate lyase ACP] + diphosphate. In terms of biological role, transfers 2-(5''-triphosphoribosyl)-3'-dephosphocoenzyme-A on a serine residue to the apo-acyl carrier protein (gamma chain) of the citrate lyase to yield holo-acyl carrier protein. This is Probable apo-citrate lyase phosphoribosyl-dephospho-CoA transferase from Streptococcus pyogenes serotype M18 (strain MGAS8232).